The chain runs to 864 residues: MLGKLINKFFLSRNERILKNLNDLVIKINILEKDLLKLSDKELKKKTNEFKLRLKYGDSLDSLLPEAFSVIREASKRIFGMRHFDVQILGGIILHKQCIAEMRTGEGKTLTATLPAYLNALTGKGVHIVTMNDYLAQRDANKNRILFEFLGLTVGINVSGMSRLDKKNAYLADITYGTNHEYGFDYLRDNMVFNSEKKVQRKLYFALIDEVDSILIDEARTPLVISGPIENSNILYDRINSLVSDLIPQNKKYDNSFNEIGDFCIDYKQRQVNLTEMGLKKIEKLLVKYKFISKEESLYLSKNIFFIHHILLALKAHYLFLKNVDYIIKDDQIIIVDEHTGRIMSSRRWSDGLHQAIEAKENVFIQNDNQTLATMTLQNYFRLYKKLSGMTGTASTEAFEFNSIYNLDTVIIPTNKPMIRNDLPDLVFVSKSDKMNAIISDIKNCVFRQQPVLVGTVSIEKSEKISRLLNKLNIKHNVLNAKFHSQEADIIAKAGEPNAVTIATNMAGRGTDIVLGGILKKENNEKFFTTKNSVKLLNIWKKKNRLVIKSGGLHIIGTERHESRRIDNQLRGRSGRQGDPGSSRFYLSLEDTLMKFFASENVIKIIKTLGLKSNQSIEHPWLNSAIERAQKKVENCNFDIRKQLLEYDNVINEQRSVIYNERNKLINKLDIHDHILFILKDRINFCIKQYISGNSMNVDSFFALEKELKNNFYFIKSINKFLEHDTTLYENVDKLIDLIVTTIQFSYNKNTAIVSKKYSNMIEKSVMLQILDIFWIEHLNAVDFLKQSIHLRGYAQQDPQQEYKRESFFMFQSMLEAIKNNVIKSLINIFFVDFKKNKNIYINFIDQKDYDSFHFLIMKSINIT.

Residues Gln-87, 105–109 (GEGKT), and Asp-512 contribute to the ATP site.

This sequence belongs to the SecA family. As to quaternary structure, monomer and homodimer. Part of the essential Sec protein translocation apparatus which comprises SecA, SecYEG and auxiliary proteins SecDF-YajC and YidC.

It localises to the cell inner membrane. The protein localises to the cytoplasm. It carries out the reaction ATP + H2O + cellular proteinSide 1 = ADP + phosphate + cellular proteinSide 2.. Part of the Sec protein translocase complex. Interacts with the SecYEG preprotein conducting channel. Has a central role in coupling the hydrolysis of ATP to the transfer of proteins into and across the cell membrane, serving as an ATP-driven molecular motor driving the stepwise translocation of polypeptide chains across the membrane. This is Protein translocase subunit SecA from Buchnera aphidicola subsp. Cinara cedri (strain Cc).